A 347-amino-acid polypeptide reads, in one-letter code: NADH-ubiquinone oxidoreductase chain 2 (347 aa).

11 helical membrane passes run 2–22, 25–45, 56–76, 96–116, 122–142, 149–169, 178–197, 202–219, 241–261, 278–298, and 326–346; these read SPYV…MTLI, HWLT…PLMT, AIKY…SAIF, FMMT…FWVP, IPLL…ISIF, LNMS…GWGG, ILAY…IMIY, ILNL…FMVL, MIII…TGFM, LAMM…RIIY, and IPTL…FITL.

It belongs to the complex I subunit 2 family.

The protein localises to the mitochondrion inner membrane. The catalysed reaction is a ubiquinone + NADH + 5 H(+)(in) = a ubiquinol + NAD(+) + 4 H(+)(out). Its function is as follows. Core subunit of the mitochondrial membrane respiratory chain NADH dehydrogenase (Complex I) that is believed to belong to the minimal assembly required for catalysis. Complex I functions in the transfer of electrons from NADH to the respiratory chain. The immediate electron acceptor for the enzyme is believed to be ubiquinone. This chain is NADH-ubiquinone oxidoreductase chain 2 (MT-ND2), found in Didelphis virginiana (North American opossum).